Consider the following 213-residue polypeptide: Phospho-2-dehydro-3-deoxyheptonate aldolase, Tyr-sensitive (213 aa).

This sequence belongs to the class-I DAHP synthase family.

It catalyses the reaction D-erythrose 4-phosphate + phosphoenolpyruvate + H2O = 7-phospho-2-dehydro-3-deoxy-D-arabino-heptonate + phosphate. It participates in metabolic intermediate biosynthesis; chorismate biosynthesis; chorismate from D-erythrose 4-phosphate and phosphoenolpyruvate: step 1/7. Stereospecific condensation of phosphoenolpyruvate (PEP) and D-erythrose-4-phosphate (E4P) giving rise to 3-deoxy-D-arabino-heptulosonate-7-phosphate (DAHP). This Enterobacter agglomerans (Erwinia herbicola) protein is Phospho-2-dehydro-3-deoxyheptonate aldolase, Tyr-sensitive (aroF).